Reading from the N-terminus, the 465-residue chain is ATP synthase subunit beta (465 aa).

Residue 152-159 (GGAGVGKT) coordinates ATP.

This sequence belongs to the ATPase alpha/beta chains family. As to quaternary structure, F-type ATPases have 2 components, CF(1) - the catalytic core - and CF(0) - the membrane proton channel. CF(1) has five subunits: alpha(3), beta(3), gamma(1), delta(1), epsilon(1). CF(0) has three main subunits: a(1), b(2) and c(9-12). The alpha and beta chains form an alternating ring which encloses part of the gamma chain. CF(1) is attached to CF(0) by a central stalk formed by the gamma and epsilon chains, while a peripheral stalk is formed by the delta and b chains.

It is found in the cell inner membrane. It catalyses the reaction ATP + H2O + 4 H(+)(in) = ADP + phosphate + 5 H(+)(out). In terms of biological role, produces ATP from ADP in the presence of a proton gradient across the membrane. The catalytic sites are hosted primarily by the beta subunits. The polypeptide is ATP synthase subunit beta (Campylobacter hominis (strain ATCC BAA-381 / DSM 21671 / CCUG 45161 / LMG 19568 / NCTC 13146 / CH001A)).